We begin with the raw amino-acid sequence, 188 residues long: Urease accessory protein UreE (188 aa).

Residues 142–174 (AYQSQAGAGHHHHHDHDHGHSHDHSHTHSHADS) form a disordered region. The span at 157-172 (HDHGHSHDHSHTHSHA) shows a compositional bias: basic and acidic residues.

This sequence belongs to the UreE family.

Its subcellular location is the cytoplasm. Functionally, involved in urease metallocenter assembly. Binds nickel. Probably functions as a nickel donor during metallocenter assembly. This Tolumonas auensis (strain DSM 9187 / NBRC 110442 / TA 4) protein is Urease accessory protein UreE.